Here is a 387-residue protein sequence, read N- to C-terminus: Peptostreptococcal albumin-binding protein (387 aa).

The N-terminal stretch at methionine 1–alanine 26 is a signal peptide. A disordered region spans residues leucine 122–arginine 155. A GA module region spans residues threonine 213 to alanine 265. Residues glycine 266 to arginine 360 are disordered. The span at asparagine 270–glutamine 282 shows a compositional bias: polar residues. Residues glycine 298–arginine 360 show a composition bias toward basic and acidic residues. The short motif at leucine 355–glycine 359 is the LPXTG sorting signal element. The residue at position 358 (alanine 358) is a Pentaglycyl murein peptidoglycan amidated alanine. The propeptide at glycine 359–lysine 387 is removed by sortase.

The protein resides in the secreted. The protein localises to the cell wall. Functionally, binds serum albumin. This Finegoldia magna (Peptostreptococcus magnus) protein is Peptostreptococcal albumin-binding protein (pab).